Reading from the N-terminus, the 540-residue chain is MVVSLSFPEETGGENLPSAPLEDSSKFFEEVFGDMVFARSFPEADPALSSPDAPELHQDEAQVVEELTTNGKHSLSWESPQGPGCGLQNTGNSCYLNAALQCLTHTPPLADYMLSQEHSQTCCSPEGCKMCAMEAHVTQSLLHSHSGDVMKPSQILTSAFHKHQQEDAHEFLMFTLETMHESCLQVHRQSDPTPQDTSPIHDIFGGWWRSQIKCLHCQGTSHTFDPFLDVPLDISSAQSVNQALWDTGKSEELLGENAYYCGRCRQKMPASKTLHVHIAPKVLLLVLKRFSAFTGNKLDRKVSYPEFLDLKPYLSEPTGGPLPYALYAVLVHDGATSNSGHYFCCVKAGHGKWYKMDDTKVTRCDVTSVLNENAYVLFYVQQTDLKQVSIDMPEGRVHEVLDPKYQLKKSRRKKRKKQCHCTDDAGEACENREKRAKKETSLGEGKVPQEVNHEKAGQKHGNTKLVPQEQNHQRAGQNLRNTEVELDLPVDAIVIHQPRSTANWGTDAPDKENQPWHNGDRLLTSQGLMSPGQLCSQGGR.

The interval 1 to 22 (MVVSLSFPEETGGENLPSAPLE) is disordered. Positions 85 to 382 (CGLQNTGNSC…NAYVLFYVQQ (298 aa)) constitute a USP domain. C94 acts as the Nucleophile in catalysis. Residue H341 is the Proton acceptor of the active site. Basic and acidic residues-rich tracts occupy residues 431–441 (NREKRAKKETS) and 508–520 (APDK…HNGD). Disordered stretches follow at residues 431–461 (NREK…QKHG) and 499–540 (RSTA…QGGR). Over residues 523–540 (LTSQGLMSPGQLCSQGGR) the composition is skewed to polar residues.

Belongs to the peptidase C19 family. USP17 subfamily. In terms of assembly, interacts with SUDS3; the interaction is direct.

It is found in the nucleus. Its subcellular location is the endoplasmic reticulum. It catalyses the reaction Thiol-dependent hydrolysis of ester, thioester, amide, peptide and isopeptide bonds formed by the C-terminal Gly of ubiquitin (a 76-residue protein attached to proteins as an intracellular targeting signal).. Functionally, deubiquitinating enzyme that removes conjugated ubiquitin from specific proteins to regulate different cellular processes that may include cell proliferation, progression through the cell cycle, apoptosis, cell migration, and the cellular response to viral infection. The chain is Ubiquitin carboxyl-terminal hydrolase 17-like protein E (Usp17le) from Mus musculus (Mouse).